A 286-amino-acid chain; its full sequence is 4-hydroxybenzoate octaprenyltransferase (286 aa).

8 helical membrane passes run 20-40 (IGTF…AGGM), 43-63 (LKVL…GCII), 95-115 (ILFV…NPLV), 116-136 (VQLS…KRFT), 142-162 (FLGV…LGTV), 167-187 (WWLF…YAMV), 210-230 (QIIG…GLSA), and 235-255 (VFAL…KLIF).

It belongs to the UbiA prenyltransferase family. Mg(2+) serves as cofactor.

Its subcellular location is the cell inner membrane. It carries out the reaction all-trans-octaprenyl diphosphate + 4-hydroxybenzoate = 4-hydroxy-3-(all-trans-octaprenyl)benzoate + diphosphate. The protein operates within cofactor biosynthesis; ubiquinone biosynthesis. Catalyzes the prenylation of para-hydroxybenzoate (PHB) with an all-trans polyprenyl group. Mediates the second step in the final reaction sequence of ubiquinone-8 (UQ-8) biosynthesis, which is the condensation of the polyisoprenoid side chain with PHB, generating the first membrane-bound Q intermediate 3-octaprenyl-4-hydroxybenzoate. The polypeptide is 4-hydroxybenzoate octaprenyltransferase (Shewanella loihica (strain ATCC BAA-1088 / PV-4)).